Consider the following 359-residue polypeptide: UDP-N-acetylglucosamine--N-acetylmuramyl-(pentapeptide) pyrophosphoryl-undecaprenol N-acetylglucosamine transferase (359 aa).

UDP-N-acetyl-alpha-D-glucosamine contacts are provided by residues 15–17 (TGG), N127, R166, S191, I245, 264–269 (ALTVSE), and Q290.

This sequence belongs to the glycosyltransferase 28 family. MurG subfamily.

The protein localises to the cell inner membrane. It catalyses the reaction di-trans,octa-cis-undecaprenyl diphospho-N-acetyl-alpha-D-muramoyl-L-alanyl-D-glutamyl-meso-2,6-diaminopimeloyl-D-alanyl-D-alanine + UDP-N-acetyl-alpha-D-glucosamine = di-trans,octa-cis-undecaprenyl diphospho-[N-acetyl-alpha-D-glucosaminyl-(1-&gt;4)]-N-acetyl-alpha-D-muramoyl-L-alanyl-D-glutamyl-meso-2,6-diaminopimeloyl-D-alanyl-D-alanine + UDP + H(+). It participates in cell wall biogenesis; peptidoglycan biosynthesis. Functionally, cell wall formation. Catalyzes the transfer of a GlcNAc subunit on undecaprenyl-pyrophosphoryl-MurNAc-pentapeptide (lipid intermediate I) to form undecaprenyl-pyrophosphoryl-MurNAc-(pentapeptide)GlcNAc (lipid intermediate II). The protein is UDP-N-acetylglucosamine--N-acetylmuramyl-(pentapeptide) pyrophosphoryl-undecaprenol N-acetylglucosamine transferase of Pseudomonas entomophila (strain L48).